The primary structure comprises 117 residues: MTRVKRGNVARKRRKKVLKLAKGFRGSHSKLFRTANQQVMKALRNAYRDRRKRKRDFRRLWITRINAAARVHGISYSKLTGQLKKANIELNRKMLAQLAILDPQAFAKVVETANAAQ.

It belongs to the bacterial ribosomal protein bL20 family.

Binds directly to 23S ribosomal RNA and is necessary for the in vitro assembly process of the 50S ribosomal subunit. It is not involved in the protein synthesizing functions of that subunit. The chain is Large ribosomal subunit protein bL20 from Rippkaea orientalis (strain PCC 8801 / RF-1) (Cyanothece sp. (strain PCC 8801)).